A 410-amino-acid polypeptide reads, in one-letter code: Chitin deacetylase 3 (410 aa).

The first 18 residues, 1–18 (MYGHLSLSTLSLLAVVAA), serve as a signal peptide directing secretion. Residues 19–39 (APFHESWLQPRDSDVSQLFRR) constitute a propeptide that is removed on maturation. 2 N-linked (GlcNAc...) asparagine glycosylation sites follow: Asn-61 and Asn-80. The region spanning 124–314 (KVWALSFDDG…KAVANGWSVK (191 aa)) is the NodB homology domain. Asp-131 serves as the catalytic Proton acceptor. Asp-131 is a binding site for acetate. Asp-132 serves as a coordination point for Co(2+). N-linked (GlcNAc...) asparagine glycosylation is present at Asn-149. His-183 and His-187 together coordinate Co(2+). Tyr-225 is an acetate binding site. Asn-279 carries an N-linked (GlcNAc...) asparagine glycan. His-289 (proton donor) is an active-site residue. A glycan (N-linked (GlcNAc...) asparagine) is linked at Asn-293. A lipid anchor (GPI-anchor amidated serine) is attached at Ser-385. A propeptide spans 386–410 (SSWPIANRPSLFVIACGLALAAIMV) (removed in mature form).

It belongs to the polysaccharide deacetylase family. Co(2+) serves as cofactor.

It localises to the cell membrane. It catalyses the reaction [(1-&gt;4)-N-acetyl-beta-D-glucosaminyl](n) + n H2O = chitosan + n acetate. Functionally, hydrolyzes the N-acetamido groups of N-acetyl-D-glucosamine residues in chitin to form chitosan and acetate. Chitosan is required to anchor melanin to the cell wall, for maintenance of cell wall integrity, and for proper cytokinesis. Chitosan offers an advantage during infection as it is less readily detected than chitin by host immunosurveillance mechanisms. This Cryptococcus neoformans var. neoformans serotype D (strain B-3501A) (Filobasidiella neoformans) protein is Chitin deacetylase 3.